The sequence spans 502 residues: MKISPSEITKIIEEQLKRSDREIDYFEAGRIIQVGDGIARAYGLKGVMSNELVQFENGEYGLALNLEEDNVGIVVLGDYREIKEGDLVKRTGRIIEVPAGEALLGRVVNPLGIPLDGKGPIEASEHRPVEIKAPGVVMRKPVDTPLQTGIKAIDAMIPIGRGQRELIIGDRQTGKTAIAIDTIINQKDQGVYCIYVAIGQKTAVLARIIDKLEETGAMEYTTIVAATANDPATLAYLAPYAGAAMGEYFMYSGKDALVIYDDLSKHAAAYRELSLLLRRPPGREAYPGDVFYLHSRLLERAARLNEEHGGGSLTALPIIETLANDVSAYIPTNVISITDGQIYLDPNLFYAGNRPAINVGLSVSRVGGSAQIKAMKKIAGSLRLDLAQYRELLAFAQFSTELDKATQAQLIRGEKLTELLKQEQYSPMPVEEQIAVLYAGTRGYLDDLPTDKIRQFEKQLLQTMRQKYADVLKAIREKKDMTEEIEAGLKKAVEDVRQAFVS.

An ATP-binding site is contributed by 169–176 (GDRQTGKT).

The protein belongs to the ATPase alpha/beta chains family. In terms of assembly, F-type ATPases have 2 components, CF(1) - the catalytic core - and CF(0) - the membrane proton channel. CF(1) has five subunits: alpha(3), beta(3), gamma(1), delta(1), epsilon(1). CF(0) has three main subunits: a(1), b(2) and c(9-12). The alpha and beta chains form an alternating ring which encloses part of the gamma chain. CF(1) is attached to CF(0) by a central stalk formed by the gamma and epsilon chains, while a peripheral stalk is formed by the delta and b chains.

The protein resides in the cell inner membrane. It catalyses the reaction ATP + H2O + 4 H(+)(in) = ADP + phosphate + 5 H(+)(out). Its function is as follows. Produces ATP from ADP in the presence of a proton gradient across the membrane. The alpha chain is a regulatory subunit. The chain is ATP synthase subunit alpha from Kosmotoga olearia (strain ATCC BAA-1733 / DSM 21960 / TBF 19.5.1).